The chain runs to 181 residues: Gastrokine-3 (181 aa).

Positions 1 to 20 (MKHLVASSILGVFVLTPSLA) are cleaved as a signal peptide. One can recognise a BRICHOS domain in the interval 53 to 145 (NNIFSEWDGI…MCRDDPTYFA (93 aa)). C80 and C137 form a disulfide bridge.

It belongs to the gastrokine family.

The protein localises to the secreted. Its function is as follows. May inhibit gastric epithelial cell proliferation. The protein is Gastrokine-3 (GKN3P) of Homo sapiens (Human).